The following is a 332-amino-acid chain: Glycerol-3-phosphate dehydrogenase [NAD(P)+] (332 aa).

3 residues coordinate NADPH: tryptophan 11, arginine 30, and lysine 108. The sn-glycerol 3-phosphate site is built by lysine 108, glycine 137, and serine 139. NADPH is bound at residue alanine 141. 5 residues coordinate sn-glycerol 3-phosphate: lysine 192, aspartate 245, serine 255, arginine 256, and asparagine 257. Lysine 192 functions as the Proton acceptor in the catalytic mechanism. Position 256 (arginine 256) interacts with NADPH. Residues valine 280 and glutamate 282 each coordinate NADPH.

This sequence belongs to the NAD-dependent glycerol-3-phosphate dehydrogenase family.

The protein resides in the cytoplasm. The enzyme catalyses sn-glycerol 3-phosphate + NAD(+) = dihydroxyacetone phosphate + NADH + H(+). It catalyses the reaction sn-glycerol 3-phosphate + NADP(+) = dihydroxyacetone phosphate + NADPH + H(+). The protein operates within membrane lipid metabolism; glycerophospholipid metabolism. Its function is as follows. Catalyzes the reduction of the glycolytic intermediate dihydroxyacetone phosphate (DHAP) to sn-glycerol 3-phosphate (G3P), the key precursor for phospholipid synthesis. The sequence is that of Glycerol-3-phosphate dehydrogenase [NAD(P)+] from Burkholderia cenocepacia (strain ATCC BAA-245 / DSM 16553 / LMG 16656 / NCTC 13227 / J2315 / CF5610) (Burkholderia cepacia (strain J2315)).